Here is a 283-residue protein sequence, read N- to C-terminus: Polyamine aminopropyltransferase (283 aa).

The region spanning 2–237 (ELWYTEEHTD…GHWLFGFASK (236 aa)) is the PABS domain. Gln31 is an S-methyl-5'-thioadenosine binding site. His62 and Asp86 together coordinate spermidine. S-methyl-5'-thioadenosine is bound by residues Glu106 and 137–138 (DG). Asp155 acts as the Proton acceptor in catalysis. 155 to 158 (DSTD) is a spermidine binding site. An S-methyl-5'-thioadenosine-binding site is contributed by Pro162.

The protein belongs to the spermidine/spermine synthase family. Homodimer or homotetramer.

It localises to the cytoplasm. The enzyme catalyses S-adenosyl 3-(methylsulfanyl)propylamine + putrescine = S-methyl-5'-thioadenosine + spermidine + H(+). Its pathway is amine and polyamine biosynthesis; spermidine biosynthesis; spermidine from putrescine: step 1/1. Functionally, catalyzes the irreversible transfer of a propylamine group from the amino donor S-adenosylmethioninamine (decarboxy-AdoMet) to putrescine (1,4-diaminobutane) to yield spermidine. This is Polyamine aminopropyltransferase from Clostridium perfringens (strain SM101 / Type A).